Here is an 84-residue protein sequence, read N- to C-terminus: RNA-binding protein Hfq (84 aa).

Residues 10–70 (DLFLNVLRRD…ISTIMPFRPV (61 aa)) enclose the Sm domain.

This sequence belongs to the Hfq family. Homohexamer.

Its function is as follows. RNA chaperone that binds small regulatory RNA (sRNAs) and mRNAs to facilitate mRNA translational regulation in response to envelope stress, environmental stress and changes in metabolite concentrations. Also binds with high specificity to tRNAs. This Moorella thermoacetica (strain ATCC 39073 / JCM 9320) protein is RNA-binding protein Hfq.